The following is a 475-amino-acid chain: Actin-related protein 10 (475 aa).

This sequence belongs to the actin family.

The protein resides in the cytoplasm. Its subcellular location is the cytoskeleton. The protein is Actin-related protein 10 of Dictyostelium discoideum (Social amoeba).